A 268-amino-acid polypeptide reads, in one-letter code: Regulatory protein zeste (268 aa).

A DNA-binding region spans residues 1–72 (TAEEKEVLYT…WLNSRLRKQY (72 aa)). Residues 94-108 (VSVASAVPQQQQQQH) show a composition bias toward low complexity. The disordered stretch occupies residues 94–133 (VSVASAVPQQQQQQHHQQHDNVKEEPEYQISPDASEHNPQ). The segment covering 110 to 119 (QQHDNVKEEP) has biased composition (basic and acidic residues).

As to quaternary structure, self-associates forming complexes of several hundred monomers.

It localises to the nucleus. Its function is as follows. Involved in transvection phenomena (= synapsis-dependent gene expression), where the synaptic pairing of chromosomes carrying genes with which zeste interacts influences the expression of these genes. Zeste binds to DNA and stimulates transcription from a nearby promoter. The polypeptide is Regulatory protein zeste (z) (Drosophila sechellia (Fruit fly)).